The following is a 480-amino-acid chain: Phosphomethylpyrimidine synthase (480 aa).

Substrate-binding positions include N66, M95, Y124, H159, 179–181, 220–223, and E259; these read SRG and DGLR. Zn(2+) is bound at residue H263. Residue Y286 participates in substrate binding. H327 serves as a coordination point for Zn(2+). The [4Fe-4S] cluster site is built by C407, C410, and C415. A disordered region spans residues 426 to 480; that stretch reads DGDMESIEADADDRTPLEDSSAAAVNRPPVGTHDGADIPGPDADMPADTEGSADD. Residues 470-480 show a composition bias toward acidic residues; the sequence is MPADTEGSADD.

Belongs to the ThiC family. [4Fe-4S] cluster serves as cofactor.

It catalyses the reaction 5-amino-1-(5-phospho-beta-D-ribosyl)imidazole + S-adenosyl-L-methionine = 4-amino-2-methyl-5-(phosphooxymethyl)pyrimidine + CO + 5'-deoxyadenosine + formate + L-methionine + 3 H(+). Its pathway is cofactor biosynthesis; thiamine diphosphate biosynthesis. Its function is as follows. Catalyzes the synthesis of the hydroxymethylpyrimidine phosphate (HMP-P) moiety of thiamine from aminoimidazole ribotide (AIR) in a radical S-adenosyl-L-methionine (SAM)-dependent reaction. The protein is Phosphomethylpyrimidine synthase of Haloarcula marismortui (strain ATCC 43049 / DSM 3752 / JCM 8966 / VKM B-1809) (Halobacterium marismortui).